We begin with the raw amino-acid sequence, 435 residues long: ATP-dependent protease ATPase subunit HslU (435 aa).

ATP contacts are provided by residues Val18, 60 to 65, Asp248, Glu313, and Arg385; that span reads GVGKTE.

This sequence belongs to the ClpX chaperone family. HslU subfamily. As to quaternary structure, a double ring-shaped homohexamer of HslV is capped on each side by a ring-shaped HslU homohexamer. The assembly of the HslU/HslV complex is dependent on binding of ATP.

The protein localises to the cytoplasm. In terms of biological role, ATPase subunit of a proteasome-like degradation complex; this subunit has chaperone activity. The binding of ATP and its subsequent hydrolysis by HslU are essential for unfolding of protein substrates subsequently hydrolyzed by HslV. HslU recognizes the N-terminal part of its protein substrates and unfolds these before they are guided to HslV for hydrolysis. This is ATP-dependent protease ATPase subunit HslU from Rhodospirillum rubrum (strain ATCC 11170 / ATH 1.1.1 / DSM 467 / LMG 4362 / NCIMB 8255 / S1).